The following is a 127-amino-acid chain: uncharacterized protein (127 aa).

A disordered region spans residues 1 to 24; the sequence is PLKTKPIDNNLPHRTGYNQASKQQ.

This is an uncharacterized protein from Homo sapiens (Human).